The primary structure comprises 331 residues: Glycerophosphodiester phosphodiesterase 1 (331 aa).

Over 1-3 the chain is Cytoplasmic; that stretch reads MWL. Residues 4–24 traverse the membrane as a helical segment; the sequence is WEDQGGLLGPFSFLLLVLLLV. Residues 25–247 are Lumenal-facing; sequence TRSPVNACLL…KPRYDTFWKH (223 aa). A GP-PDE domain is found at 65 to 331; it reads ISAIAHRGGS…SMVEDCEPHF (267 aa). Residues Glu-97 and Asp-99 each contribute to the Mg(2+) site. Residue Asn-168 is glycosylated (N-linked (GlcNAc...) asparagine). Asp-174 serves as a coordination point for Mg(2+). Asn-198 carries N-linked (GlcNAc...) asparagine glycosylation. A helical transmembrane segment spans residues 248–268; it reads FIFVMMDILLDWSMHNILWYL. The Cytoplasmic segment spans residues 269 to 331; the sequence is CGISAFLMQK…SMVEDCEPHF (63 aa).

Belongs to the glycerophosphoryl diester phosphodiesterase family. In terms of assembly, interacts with PRAF2. Interacts with RGS16. Mg(2+) serves as cofactor. N-glycosylated. As to expression, widely expressed.

The protein resides in the cell membrane. It localises to the cytoplasmic vesicle membrane. It catalyses the reaction sn-glycero-3-phospho-1D-myo-inositol + H2O = myo-inositol + sn-glycerol 3-phosphate + H(+). The catalysed reaction is 1-O-(1Z-octadecenyl)-sn-glycero-3-phospho-(N-5Z,8Z,11Z,14Z-eicosatetraenoyl)-ethanolamine + H2O = 1-O-(1Z-octadecenyl)-sn-glycero-3-phosphate + N-(5Z,8Z,11Z,14Z-eicosatetraenoyl)-ethanolamine + H(+). It carries out the reaction 1-O-(1Z-octadecenyl)-sn-glycero-3-phospho-(N-9Z-octadecenoyl)-ethanolamine + H2O = 1-O-(1Z-octadecenyl)-sn-glycero-3-phosphate + N-(9Z-octadecenoyl) ethanolamine + H(+). The enzyme catalyses 1-O-(1Z-octadecenyl)-sn-glycero-3-phospho-N-hexadecanoyl-ethanolamine + H2O = 1-O-(1Z-octadecenyl)-sn-glycero-3-phosphate + N-hexadecanoylethanolamine + H(+). It catalyses the reaction N-(4Z,7Z,10Z,13Z,16Z,19Z)-docosahexaenoyl-sn-glycero-3-phosphoethanolamine + H2O = N-(4Z,7Z,10Z,13Z,16Z,19Z)-docosahexaenoyl ethanolamine + sn-glycerol 3-phosphate + H(+). The catalysed reaction is N-eicosanoyl-sn-glycero-3-phosphoethanolamine + H2O = N-eicosanoyl ethanolamine + sn-glycerol 3-phosphate + H(+). It carries out the reaction N-hexadecanoyl-sn-glycero-3-phosphoethanolamine + H2O = N-hexadecanoylethanolamine + sn-glycerol 3-phosphate + H(+). The enzyme catalyses N-(9Z-octadecenoyl)-sn-glycero-3-phosphoethanolamine + H2O = N-(9Z-octadecenoyl) ethanolamine + sn-glycerol 3-phosphate + H(+). It catalyses the reaction N-(5Z,8Z,11Z,14Z-eicosatetraenoyl)-sn-glycero-3-phosphoethanolamine + H2O = N-(5Z,8Z,11Z,14Z-eicosatetraenoyl)-ethanolamine + sn-glycerol 3-phosphate + H(+). With respect to regulation, inhibited by EDTA, calcium chloride, and zinc chloride. Enhanced by magnesium chloride. Glycerophosphodiester phosphodiesterase activity can be modulated by G-protein signaling pathways. Hydrolyzes the phosphodiester bond of glycerophosphodiesters such as glycerophosphoinositol (GroPIns) and glycerophosphoethanolamine (GroPEth), to yield a glycerol phosphate and an alcohol. Hydrolyzes glycerophospho-N-acylethanolamines to N-acylethanolamines in the brain and participates in bioactive N-acylethanolamine biosynthesis such as anandamide (an endocannabinoid), N-palmitoylethanolamine (an anti-inflammatory), and N-oleoylethanolamine (an anorexic). In addition, has a lysophospholipase D activity by hydrolyzing N-acyl-lysoplasmenylethanolamine (N-acyl-lysoPlsEt) to N-acylethanolamine. However lysophospholipase D activity is lower than glycerophosphodiester phosphodiesterase activity. Has little or no activity towards glycerophosphocholine. This chain is Glycerophosphodiester phosphodiesterase 1, found in Homo sapiens (Human).